The following is a 380-amino-acid chain: Erythronate-4-phosphate dehydrogenase (380 aa).

2 residues coordinate substrate: Ser-45 and Thr-66. NAD(+) is bound by residues 126–127 (QV), Asp-146, Thr-174, 205–207 (ASR), and Asp-231. The active site involves Arg-207. Glu-236 is an active-site residue. The Proton donor role is filled by His-253. Gly-256 contacts NAD(+). Tyr-257 provides a ligand contact to substrate.

It belongs to the D-isomer specific 2-hydroxyacid dehydrogenase family. PdxB subfamily. In terms of assembly, homodimer.

The protein localises to the cytoplasm. It carries out the reaction 4-phospho-D-erythronate + NAD(+) = (R)-3-hydroxy-2-oxo-4-phosphooxybutanoate + NADH + H(+). It participates in cofactor biosynthesis; pyridoxine 5'-phosphate biosynthesis; pyridoxine 5'-phosphate from D-erythrose 4-phosphate: step 2/5. Catalyzes the oxidation of erythronate-4-phosphate to 3-hydroxy-2-oxo-4-phosphonooxybutanoate. The polypeptide is Erythronate-4-phosphate dehydrogenase (Azotobacter vinelandii (strain DJ / ATCC BAA-1303)).